The following is a 359-amino-acid chain: Protein Wnt-5a (359 aa).

Positions 1–20 (MASRYLTLAAALLASFLQVD) are cleaved as a signal peptide. Residues cysteine 83 and cysteine 94 are joined by a disulfide bond. Asparagine 93 and asparagine 99 each carry an N-linked (GlcNAc...) asparagine glycan. Cystine bridges form between cysteine 133-cysteine 141, cysteine 143-cysteine 161, cysteine 217-cysteine 231, cysteine 219-cysteine 226, cysteine 288-cysteine 319, cysteine 304-cysteine 314, cysteine 318-cysteine 358, cysteine 334-cysteine 349, cysteine 336-cysteine 346, and cysteine 341-cysteine 342. Serine 223 carries O-palmitoleoyl serine; by PORCN lipidation. Residues asparagine 291 and asparagine 305 are each glycosylated (N-linked (GlcNAc...) asparagine).

This sequence belongs to the Wnt family. In terms of processing, palmitoleoylation is required for efficient binding to frizzled receptors. Depalmitoleoylation leads to Wnt signaling pathway inhibition.

It localises to the secreted. Its subcellular location is the extracellular space. It is found in the extracellular matrix. Ligand for members of the frizzled family of seven transmembrane receptors. Can activate or inhibit canonical Wnt signaling, depending on receptor context. Required during embryogenesis for extension of the primary anterior-posterior axis. The protein is Protein Wnt-5a (WNT5A) of Pleurodeles waltl (Iberian ribbed newt).